A 262-amino-acid chain; its full sequence is Homeobox protein Nkx-6.3 (262 aa).

Residues 140–199 (KKHTRPTFTGHQIFALEKTFEQTKYLAGPERARLAYSLGMTESQVKVWFQNRRTKWRKKS) constitute a DNA-binding region (homeobox). Residues 197 to 237 (KKSALEPSSSTPRAPGGASGDRAASENEDDEYNKPLDPDSD) are disordered.

As to expression, expressed in the developing CNS and gastro-intestinal tract.

Its subcellular location is the nucleus. Its function is as follows. Putative transcription factor, which may be involved in patterning of central nervous system and pancreas. In Mus musculus (Mouse), this protein is Homeobox protein Nkx-6.3 (Nkx6-3).